A 1575-amino-acid chain; its full sequence is Ras GTPase-activating-like protein IQGAP2 (1575 aa).

Ser-16 is modified (phosphoserine). Residues 41–156 (LCHLEEAKRW…YCIHALSLYL (116 aa)) enclose the Calponin-homology (CH) domain. Residue Thr-356 is modified to Phosphothreonine. The 34-residue stretch at 594 to 627 (VSSDGSWLKLNLHKKYDYYYNTDSKESSWVTPES) folds into the WW domain. Residues Ser-595, Ser-599, and Ser-685 each carry the phosphoserine modification. IQ domains follow at residues 690–719 (QEENVVKIQAFWKGYKQRKEYMHRRQTFID), 720–749 (NTDSIVKIQSWFRMATARKSYLSRLQYFRD), and 750–779 (HNNEIVKIQSLLRANKARDDYKTLVGSENP). Thr-716 carries the phosphothreonine modification. Thr-782, Thr-881, Thr-1002, and Thr-1269 each carry phosphothreonine. One can recognise a Ras-GAP domain in the interval 933-1182 (YLLLKLFKTA…QEFRKYFKEA (250 aa)). A phosphoserine mark is found at Ser-1271, Ser-1279, Ser-1358, and Ser-1461.

Isoform 2 expression is enhanced in testis.

In terms of biological role, binds to activated CDC42 and RAC1 but does not seem to stimulate their GTPase activity. Associates with calmodulin. The protein is Ras GTPase-activating-like protein IQGAP2 (IQGAP2) of Homo sapiens (Human).